A 282-amino-acid chain; its full sequence is METGAGIGLYPLHRCKTIYLVRHAQGIHNVDGEKNYKAYMSHDYFDAELTQLGWKQVDSLRKHVHSSGLHKKIELVISSPLMRTLQTAVGVFGGEGYTDMSDVLPLMVANAGNSSRAAISSLNCPPVITEESCREHLGVHPCDQRRSISDYQFLFPAVDFSLIESEEDKLWKADVRETIEELAARGKKFLNWLWTRKEKEIAIVTHSGFLFHTLNALQNECHPDVKKEICGHFANCELRSMVIVDRSMLGSDSSVTDYPGKIPKGIDLPSDAVVDDNNIKVE.

His-23 serves as the catalytic Tele-phosphohistidine intermediate. The Proton donor/acceptor role is filled by Glu-135.

Belongs to the phosphoglycerate mutase family.

Functionally, may play a role in carbohydrates metabolism. This Arabidopsis thaliana (Mouse-ear cress) protein is Phosphoglycerate mutase-like protein 1.